Reading from the N-terminus, the 578-residue chain is Maltogenic alpha-amylase (578 aa).

Belongs to the glycosyl hydrolase 13 family.

The catalysed reaction is hydrolysis of (1-&gt;4)-alpha-D-glucosidic linkages in polysaccharides so as to remove successive alpha-maltose residues from the non-reducing ends of the chains.. In terms of biological role, converts starch into maltose. In contrary to other maltogenic alpha-amylases BlmA cannot hydrolyze 1,4-alpha-glucosidic linkage next to 1,6-alpha-glucosidic linkages. The sequence is that of Maltogenic alpha-amylase (blmA) from Bacillus licheniformis.